The following is a 129-amino-acid chain: Prefoldin subunit 6 (129 aa).

An N-acetylalanine modification is found at alanine 2. Residue lysine 21 is modified to N6-acetyllysine. Lysine 66 is subject to N6-acetyllysine; alternate. Residue lysine 66 forms a Glycyl lysine isopeptide (Lys-Gly) (interchain with G-Cter in SUMO1); alternate linkage. Lysine 66 is covalently cross-linked (Glycyl lysine isopeptide (Lys-Gly) (interchain with G-Cter in SUMO2); alternate).

The protein belongs to the prefoldin subunit beta family. Heterohexamer of two PFD-alpha type and four PFD-beta type subunits. Component of the PAQosome complex which is responsible for the biogenesis of several protein complexes and which consists of R2TP complex members RUVBL1, RUVBL2, RPAP3 and PIH1D1, URI complex members PFDN2, PFDN6, PDRG1, UXT and URI1 as well as ASDURF, POLR2E and DNAAF10/WDR92.

In terms of biological role, binds specifically to cytosolic chaperonin (c-CPN) and transfers target proteins to it. Binds to nascent polypeptide chain and promotes folding in an environment in which there are many competing pathways for nonnative proteins. This Bos taurus (Bovine) protein is Prefoldin subunit 6 (PFDN6).